The chain runs to 394 residues: ATP phosphoribosyltransferase regulatory subunit (394 aa).

The protein belongs to the class-II aminoacyl-tRNA synthetase family. HisZ subfamily. In terms of assembly, heteromultimer composed of HisG and HisZ subunits.

The protein localises to the cytoplasm. It participates in amino-acid biosynthesis; L-histidine biosynthesis; L-histidine from 5-phospho-alpha-D-ribose 1-diphosphate: step 1/9. Its function is as follows. Required for the first step of histidine biosynthesis. May allow the feedback regulation of ATP phosphoribosyltransferase activity by histidine. The polypeptide is ATP phosphoribosyltransferase regulatory subunit (Teredinibacter turnerae (strain ATCC 39867 / T7901)).